The sequence spans 95 residues: MLKSNNASETAARKVGDKTAKKVFFRRRKGCPLSVPHAPVIDYKNPELLIKFVSEGGRMLPSRITNVCAKKQRKLNNAVKIARILALLPFVFQAK.

This sequence belongs to the bacterial ribosomal protein bS18 family. As to quaternary structure, part of the 30S ribosomal subunit. Forms a tight heterodimer with protein bS6.

Its function is as follows. Binds as a heterodimer with protein bS6 to the central domain of the 16S rRNA, where it helps stabilize the platform of the 30S subunit. The sequence is that of Small ribosomal subunit protein bS18 from Rickettsia massiliae (strain Mtu5).